The primary structure comprises 656 residues: Chaperone protein DnaK (656 aa).

Position 204 is a phosphothreonine; by autocatalysis (threonine 204). A disordered region spans residues 602-656 (KLAERVYAKKGGAAGAPPGGEAEGEPQAQAGGKKEDVVDAEFEEVKDEKKKDEDK). Over residues 620 to 632 (GGEAEGEPQAQAG) the composition is skewed to low complexity. Positions 647–656 (KDEKKKDEDK) are enriched in basic and acidic residues.

It belongs to the heat shock protein 70 family.

Acts as a chaperone. The chain is Chaperone protein DnaK from Coxiella burnetii (strain CbuG_Q212) (Coxiella burnetii (strain Q212)).